The sequence spans 118 residues: Telomere bouquet protein 2 (118 aa).

In terms of assembly, interacts with bqt1. The bqt1-bqt2-sad1 complex binds rap1.

Its subcellular location is the cytoplasm. It is found in the nucleus. The protein resides in the cytoskeleton. It localises to the microtubule organizing center. The protein localises to the spindle pole body. Its subcellular location is the chromosome. It is found in the telomere. Involved in chromosome segregation. During meiotic prophase, connects telomeres to the spindle pole body by forming a bridge between the telomere protein rap1 and the spindle pole body protein sad1. This is Telomere bouquet protein 2 (bqt2) from Schizosaccharomyces pombe (strain 972 / ATCC 24843) (Fission yeast).